The following is a 257-amino-acid chain: uncharacterized protein (257 aa).

D34, D60, V61, N87, Y152, and K156 together coordinate NAD(+). Residue Y152 is the Proton acceptor of the active site.

This sequence belongs to the short-chain dehydrogenases/reductases (SDR) family.

This is an uncharacterized protein from Bacillus subtilis (strain 168).